Reading from the N-terminus, the 156-residue chain is Snaclec trimecetin subunit alpha (156 aa).

The N-terminal stretch at M1–A23 is a signal peptide. 3 disulfides stabilise this stretch: C25–C36, C53–C150, and C125–C142. Positions F32–K151 constitute a C-type lectin domain.

The protein belongs to the snaclec family. In terms of assembly, heterodimer of subunits alpha and beta; disulfide-linked. As to expression, expressed by the venom gland.

The protein localises to the secreted. Snaclec that induces platelet aggregation in either human platelet rich plasma (PRP) or washed platelet suspensions. It causes aggregation in a dose-dependent manner even in the absence of various platelet agonists such as ADP or von Willebrand factor (vWF). Interestingly, it does not induce aggregation in rabbit PRP. A monoclonal antibody against the platelet GPIb receptor blocks the aggregation induced by trimecetin, suggesting that it acts by binding to GPIb (GP1BA/GP1BB). The chain is Snaclec trimecetin subunit alpha from Protobothrops mucrosquamatus (Taiwan habu).